A 110-amino-acid chain; its full sequence is Large ribosomal subunit protein uL22 (110 aa).

The protein belongs to the universal ribosomal protein uL22 family. In terms of assembly, part of the 50S ribosomal subunit.

Its function is as follows. This protein binds specifically to 23S rRNA; its binding is stimulated by other ribosomal proteins, e.g. L4, L17, and L20. It is important during the early stages of 50S assembly. It makes multiple contacts with different domains of the 23S rRNA in the assembled 50S subunit and ribosome. In terms of biological role, the globular domain of the protein is located near the polypeptide exit tunnel on the outside of the subunit, while an extended beta-hairpin is found that lines the wall of the exit tunnel in the center of the 70S ribosome. This Photobacterium profundum (strain SS9) protein is Large ribosomal subunit protein uL22.